Consider the following 803-residue polypeptide: Lon protease (803 aa).

The Lon N-terminal domain occupies 9-202; it reads MPVLPLRDVV…YLLGMMESEA (194 aa). Residue 356–363 coordinates ATP; it reads GPPGVGKT. The Lon proteolytic domain maps to 592–773; that stretch reads QNRIGEVTGL…DEVLGFALEN (182 aa). Active-site residues include S679 and K722.

This sequence belongs to the peptidase S16 family. In terms of assembly, homohexamer. Organized in a ring with a central cavity.

It localises to the cytoplasm. The catalysed reaction is Hydrolysis of proteins in presence of ATP.. ATP-dependent serine protease that mediates the selective degradation of mutant and abnormal proteins as well as certain short-lived regulatory proteins. Required for cellular homeostasis and for survival from DNA damage and developmental changes induced by stress. Degrades polypeptides processively to yield small peptide fragments that are 5 to 10 amino acids long. Binds to DNA in a double-stranded, site-specific manner. The protein is Lon protease of Haemophilus influenzae (strain ATCC 51907 / DSM 11121 / KW20 / Rd).